The sequence spans 163 residues: Photosystem II extrinsic protein V (163 aa).

The N-terminal stretch at 1 to 26 is a signal peptide; the sequence is MFRRLIGVVVATVLLSFQLLVGSATA. Residues C63, C66, H67, and H118 each contribute to the heme c site.

It belongs to the cytochrome c family. PsbV subfamily. In terms of assembly, PSII is composed of 1 copy each of membrane proteins PsbA, PsbB, PsbC, PsbD, PsbE, PsbF, PsbH, PsbI, PsbJ, PsbK, PsbL, PsbM, PsbT, PsbX, PsbY, PsbZ, Psb30/Ycf12, peripheral proteins PsbO, CyanoQ (PsbQ), PsbU, PsbV and a large number of cofactors. It forms dimeric complexes. It depends on heme c as a cofactor.

The protein resides in the cellular thylakoid membrane. Its function is as follows. One of the extrinsic, lumenal subunits of photosystem II (PSII). PSII is a light-driven water plastoquinone oxidoreductase, using light energy to abstract electrons from H(2)O, generating a proton gradient subsequently used for ATP formation. The extrinsic proteins stabilize the structure of photosystem II oxygen-evolving complex (OEC), the ion environment of oxygen evolution and protect the OEC against heat-induced inactivation. Low-potential cytochrome c that plays a role in the OEC of PSII. This chain is Photosystem II extrinsic protein V, found in Nostoc punctiforme (strain ATCC 29133 / PCC 73102).